Consider the following 182-residue polypeptide: Putative manganese efflux pump MntP (182 aa).

A run of 6 helical transmembrane segments spans residues 7–27, 38–58, 71–91, 106–126, 131–151, and 159–179; these read IISIILLAIGLSMDGFSVSLG, IAYIGLTIGFLHMLMPLAGML, TSFAGGVLLFLIGAHMFFSAF, LWIIAFSVSLDSFTVGLGLGI, IFVTLFAFGIVSCFLTWLGML, and FLGVYSELLGGSILCGFGIFI.

This sequence belongs to the MntP (TC 9.B.29) family.

It is found in the cell membrane. Its function is as follows. Probably functions as a manganese efflux pump. This Oceanobacillus iheyensis (strain DSM 14371 / CIP 107618 / JCM 11309 / KCTC 3954 / HTE831) protein is Putative manganese efflux pump MntP.